A 620-amino-acid polypeptide reads, in one-letter code: 1-deoxy-D-xylulose-5-phosphate synthase (620 aa).

Thiamine diphosphate contacts are provided by residues histidine 80 and glycine 121–serine 123. Mg(2+) is bound at residue aspartate 152. Residues glycine 153–alanine 154, asparagine 181, tyrosine 288, and glutamate 370 each bind thiamine diphosphate. Position 181 (asparagine 181) interacts with Mg(2+).

Belongs to the transketolase family. DXPS subfamily. Homodimer. The cofactor is Mg(2+). Thiamine diphosphate serves as cofactor.

The catalysed reaction is D-glyceraldehyde 3-phosphate + pyruvate + H(+) = 1-deoxy-D-xylulose 5-phosphate + CO2. The protein operates within metabolic intermediate biosynthesis; 1-deoxy-D-xylulose 5-phosphate biosynthesis; 1-deoxy-D-xylulose 5-phosphate from D-glyceraldehyde 3-phosphate and pyruvate: step 1/1. Functionally, catalyzes the acyloin condensation reaction between C atoms 2 and 3 of pyruvate and glyceraldehyde 3-phosphate to yield 1-deoxy-D-xylulose-5-phosphate (DXP). The polypeptide is 1-deoxy-D-xylulose-5-phosphate synthase (Escherichia fergusonii (strain ATCC 35469 / DSM 13698 / CCUG 18766 / IAM 14443 / JCM 21226 / LMG 7866 / NBRC 102419 / NCTC 12128 / CDC 0568-73)).